A 360-amino-acid chain; its full sequence is 3-dehydroquinate synthase (360 aa).

Residues 71–76 (DGEAHK), 105–109 (GVVGD), 129–130 (TT), lysine 142, and lysine 151 each bind NAD(+). Zn(2+) contacts are provided by glutamate 184, histidine 247, and histidine 264.

This sequence belongs to the sugar phosphate cyclases superfamily. Dehydroquinate synthase family. It depends on Co(2+) as a cofactor. Zn(2+) serves as cofactor. Requires NAD(+) as cofactor.

The protein localises to the cytoplasm. The enzyme catalyses 7-phospho-2-dehydro-3-deoxy-D-arabino-heptonate = 3-dehydroquinate + phosphate. It functions in the pathway metabolic intermediate biosynthesis; chorismate biosynthesis; chorismate from D-erythrose 4-phosphate and phosphoenolpyruvate: step 2/7. Catalyzes the conversion of 3-deoxy-D-arabino-heptulosonate 7-phosphate (DAHP) to dehydroquinate (DHQ). The protein is 3-dehydroquinate synthase of Azoarcus sp. (strain BH72).